Consider the following 187-residue polypeptide: MLAPGESVLIPAEEISLSAGDVISLSVHNLIASVSSYRPWWSEFLAFGSIDRPSSFSPAVSRVKLNLHHFAVNYVLLTAASITLFLIGDPMALVTVASFVAMWLLLYFYRDHPLVLYGRHISDRVIVFGLILGSLWALWFINSLQCLILGVVTSVLLCLVHAIIRNSDDLFVQEKDVVVPSNFLHWS.

Transmembrane regions (helical) follow at residues 84 to 104 (LFLI…AMWL), 125 to 145 (VIVF…NSLQ), and 146 to 166 (CLIL…IIRN).

It belongs to the PRA1 family. As to expression, expressed in roots and lateral roots.

It is found in the endosome membrane. Functionally, may be involved in both secretory and endocytic intracellular trafficking in the endosomal/prevacuolar compartments. This chain is PRA1 family protein G1 (PRA1G1), found in Arabidopsis thaliana (Mouse-ear cress).